Consider the following 712-residue polypeptide: Polyribonucleotide nucleotidyltransferase (712 aa).

The Mg(2+) site is built by Asp-487 and Asp-493. The KH domain occupies 554-613 (PKIITMTINPDKIRDVIGPSGKQINKIIEETGVKIDIEQDGTVFISSINQEMNDKAKKII). Positions 623–691 (GEIYEGKVKR…KQGRVNLSRK (69 aa)) constitute an S1 motif domain.

The protein belongs to the polyribonucleotide nucleotidyltransferase family. Requires Mg(2+) as cofactor.

The protein localises to the cytoplasm. The catalysed reaction is RNA(n+1) + phosphate = RNA(n) + a ribonucleoside 5'-diphosphate. Functionally, involved in mRNA degradation. Catalyzes the phosphorolysis of single-stranded polyribonucleotides processively in the 3'- to 5'-direction. The polypeptide is Polyribonucleotide nucleotidyltransferase (Bacillus cereus (strain G9842)).